We begin with the raw amino-acid sequence, 335 residues long: Cathepsin B (335 aa).

The N-terminal stretch at 1-19 (MWQLLATLSCLLVLTSARS) is a signal peptide. Positions 20–79 (SLHFPPLSDEMVNYVNKQNTTWKAGHNFYNVDLSYVKKLCGAILGGPKLPQRDAFAADMV) are cleaved as a propeptide — activation peptide. Disulfide bonds link Cys93/Cys122, Cys105/Cys150, Cys141/Cys207, Cys142/Cys146, Cys179/Cys211, and Cys187/Cys198. Residue Cys108 is part of the active site. An N-linked (GlcNAc...) asparagine glycan is attached at Asn192. Lys220 carries the N6-acetyllysine modification. Catalysis depends on residues His278 and Asn298. The propeptide occupies 333-335 (HQH).

This sequence belongs to the peptidase C1 family. Dimer of a heavy chain and a light chain cross-linked by a disulfide bond. Interacts with SRPX2. Directly interacts with SHKBP1.

The protein resides in the lysosome. It localises to the melanosome. Its subcellular location is the secreted. The protein localises to the extracellular space. It is found in the apical cell membrane. It carries out the reaction Hydrolysis of proteins with broad specificity for peptide bonds. Preferentially cleaves -Arg-Arg-|-Xaa bonds in small molecule substrates (thus differing from cathepsin L). In addition to being an endopeptidase, shows peptidyl-dipeptidase activity, liberating C-terminal dipeptides.. In terms of biological role, thiol protease which is believed to participate in intracellular degradation and turnover of proteins. Cleaves matrix extracellular phosphoglycoprotein MEPE. Involved in the solubilization of cross-linked TG/thyroglobulin in the thyroid follicle lumen. Has also been implicated in tumor invasion and metastasis. The sequence is that of Cathepsin B (CTSB) from Ovis aries (Sheep).